The primary structure comprises 315 residues: Ectopic P granules protein 4 (315 aa).

6 helical membrane-spanning segments follow: residues 84–104, 113–133, 146–166, 190–210, 221–241, and 242–262; these read IGFL…FSFF, IGYI…ALWF, LPPP…ISAL, IVYL…FFDG, IFES…LACS, and ISSN…FFII.

It belongs to the EI24 family. Expressed in pharyngeal and body wall muscles and intestine cells.

The protein resides in the cytoplasm. It is found in the membrane. Involved in autophagy. Thought to act in autophagasome and omegasome formation. In Caenorhabditis elegans, this protein is Ectopic P granules protein 4.